The primary structure comprises 116 residues: uncharacterized protein (116 aa).

This is an uncharacterized protein from Acidianus filamentous virus 1 (isolate United States/Yellowstone) (AFV-1).